Reading from the N-terminus, the 101-residue chain is NADH-quinone oxidoreductase subunit K (101 aa).

Helical transmembrane passes span 4–24 (LSHYLTVAAILFTLGVLGIFI), 29–49 (IIVILMSVELILLAVNINLVA), and 65–85 (FVLTVAAAEAAIGLAILVVFF).

Belongs to the complex I subunit 4L family. NDH-1 is composed of 14 different subunits. Subunits NuoA, H, J, K, L, M, N constitute the membrane sector of the complex.

It is found in the cell inner membrane. The enzyme catalyses a quinone + NADH + 5 H(+)(in) = a quinol + NAD(+) + 4 H(+)(out). Functionally, NDH-1 shuttles electrons from NADH, via FMN and iron-sulfur (Fe-S) centers, to quinones in the respiratory chain. The immediate electron acceptor for the enzyme in this species is believed to be ubiquinone. Couples the redox reaction to proton translocation (for every two electrons transferred, four hydrogen ions are translocated across the cytoplasmic membrane), and thus conserves the redox energy in a proton gradient. In Methylobacterium nodulans (strain LMG 21967 / CNCM I-2342 / ORS 2060), this protein is NADH-quinone oxidoreductase subunit K.